A 254-amino-acid chain; its full sequence is Hydroxyacylglutathione hydrolase (254 aa).

Positions 54, 56, 58, 59, 111, 130, and 168 each coordinate Zn(2+).

It belongs to the metallo-beta-lactamase superfamily. Glyoxalase II family. As to quaternary structure, monomer. Requires Zn(2+) as cofactor.

It catalyses the reaction an S-(2-hydroxyacyl)glutathione + H2O = a 2-hydroxy carboxylate + glutathione + H(+). Its pathway is secondary metabolite metabolism; methylglyoxal degradation; (R)-lactate from methylglyoxal: step 2/2. In terms of biological role, thiolesterase that catalyzes the hydrolysis of S-D-lactoyl-glutathione to form glutathione and D-lactic acid. The sequence is that of Hydroxyacylglutathione hydrolase from Legionella pneumophila (strain Corby).